Reading from the N-terminus, the 303-residue chain is MWFKNLTVYRFNKPFSVDTESMEKSLEDFTFSPCSSQDISKFGFSNAFGKHGDTLVHTAADRHLICATKEEKILPAQVIKEALEEKVALLESEDGRKLAKKEKDALKDEITTTLLPRAFSRRSQIRALILPEIQMILVDSSSAAKSEELMALLRKAIGTLPIIPMSFKTPIETQLTEWLKESKTPAPFEMQDEAELKSDSDEGGIVRFKQQDLSENEVLAHIEVGKQVHKLALHFGQSVAFLLQSDAAIKRLKFSEEFRAGNDDLGNEDPMARLDADFALMGSELIALVNAVVEALGGLEDSI.

Belongs to the RdgC family.

It is found in the cytoplasm. The protein localises to the nucleoid. Its function is as follows. May be involved in recombination. The chain is Recombination-associated protein RdgC from Shewanella piezotolerans (strain WP3 / JCM 13877).